The primary structure comprises 234 residues: Phosphoribosylaminoimidazole-succinocarboxamide synthase (234 aa).

Belongs to the SAICAR synthetase family.

The enzyme catalyses 5-amino-1-(5-phospho-D-ribosyl)imidazole-4-carboxylate + L-aspartate + ATP = (2S)-2-[5-amino-1-(5-phospho-beta-D-ribosyl)imidazole-4-carboxamido]succinate + ADP + phosphate + 2 H(+). It participates in purine metabolism; IMP biosynthesis via de novo pathway; 5-amino-1-(5-phospho-D-ribosyl)imidazole-4-carboxamide from 5-amino-1-(5-phospho-D-ribosyl)imidazole-4-carboxylate: step 1/2. This chain is Phosphoribosylaminoimidazole-succinocarboxamide synthase, found in Staphylococcus aureus (strain COL).